Consider the following 276-residue polypeptide: MERRWVFVLLDVLCVLVASLPFIILTLVNAPYKRGFYCGDDSIRYPYRPDTITHGLMAGVIITATVILVSLGEAYLVYTDRLYSRSNFNNYVAAIYKVLGTFLFGAAVSQSLTDLAKYMIGRLRPSFLAVCDPDWSQVNCSGYVQLEVCRGSPANVTEARLSFYSGHSSFGMYCMLFLALYVQARLCWKWARLLRPTVQFFLVAFAIYVGYTRVSDHKHHWSDVLVGLLQGALVACLTVRYVSDFFKSRPPQPCQEDEVPERKPSLSLTLTLGDRP.

At 1-4 (MERR) the chain is on the cytoplasmic side. Residues 5–25 (WVFVLLDVLCVLVASLPFIIL) traverse the membrane as a helical segment. Residues 26 to 51 (TLVNAPYKRGFYCGDDSIRYPYRPDT) lie on the Lumenal side of the membrane. The helical transmembrane segment at 52-72 (ITHGLMAGVIITATVILVSLG) threads the bilayer. The Cytoplasmic segment spans residues 73–87 (EAYLVYTDRLYSRSN). The helical transmembrane segment at 88–108 (FNNYVAAIYKVLGTFLFGAAV) threads the bilayer. Topologically, residues 109–161 (SQSLTDLAKYMIGRLRPSFLAVCDPDWSQVNCSGYVQLEVCRGSPANVTEARL) are lumenal. Residues 117-125 (KYMIGRLRP) form a phosphatase sequence motif I region. Residues Asn-139 and Asn-155 are each glycosylated (N-linked (GlcNAc...) asparagine). The helical transmembrane segment at 162–182 (SFYSGHSSFGMYCMLFLALYV) threads the bilayer. Residues 164–167 (YSGH) are phosphatase sequence motif II. His-167 serves as the catalytic Proton donors. Over 183 to 189 (QARLCWK) the chain is Cytoplasmic. Residues 190–210 (WARLLRPTVQFFLVAFAIYVG) traverse the membrane as a helical segment. Residues 211 to 218 (YTRVSDHK) lie on the Lumenal side of the membrane. The interval 212–223 (TRVSDHKHHWSD) is phosphatase sequence motif III. The Nucleophile role is filled by His-219. The helical transmembrane segment at 219-239 (HHWSDVLVGLLQGALVACLTV) threads the bilayer. Residues 240–276 (RYVSDFFKSRPPQPCQEDEVPERKPSLSLTLTLGDRP) lie on the Cytoplasmic side of the membrane. Residues 251 to 276 (PQPCQEDEVPERKPSLSLTLTLGDRP) form a disordered region.

The protein belongs to the PA-phosphatase related phosphoesterase family. In terms of assembly, forms functional homodimers and homooligomers. Can also form heterooligomers with PLPP1 and PLPP3. N-glycosylated. In terms of tissue distribution, expressed at high levels in lung, liver and kidney; at low levels in heart and brain, and was not detected in skeletal muscle.

The protein localises to the membrane. It is found in the cell membrane. It localises to the early endosome membrane. Its subcellular location is the endoplasmic reticulum membrane. It carries out the reaction a 1,2-diacyl-sn-glycero-3-phosphate + H2O = a 1,2-diacyl-sn-glycerol + phosphate. The catalysed reaction is 1,2-dihexadecanoyl-sn-glycero-3-phosphate + H2O = 1,2-dihexadecanoyl-sn-glycerol + phosphate. The enzyme catalyses 1,2-di-(9Z-octadecenoyl)-sn-glycero-3-phosphate + H2O = 1,2-di-(9Z-octadecenoyl)-sn-glycerol + phosphate. It catalyses the reaction a monoacyl-sn-glycero-3-phosphate + H2O = a monoacylglycerol + phosphate. It carries out the reaction (9Z)-octadecenoyl-sn-glycero-3-phosphate + H2O = (9Z-octadecenoyl)-glycerol + phosphate. The catalysed reaction is sphing-4-enine 1-phosphate + H2O = sphing-4-enine + phosphate. The enzyme catalyses an N-acylsphing-4-enine 1-phosphate + H2O = an N-acylsphing-4-enine + phosphate. It catalyses the reaction N-(octanoyl)-sphing-4-enine-1-phosphate + H2O = N-octanoylsphing-4-enine + phosphate. It carries out the reaction N-(9Z-octadecenoyl)-ethanolamine phosphate + H2O = N-(9Z-octadecenoyl) ethanolamine + phosphate. It functions in the pathway lipid metabolism; phospholipid metabolism. Its activity is regulated as follows. Magnesium-independent phospholipid phosphatase. Insensitive to N-ethylmaleimide. Magnesium-independent phospholipid phosphatase that catalyzes the dephosphorylation of a variety of glycerolipid and sphingolipid phosphate esters including phosphatidate/PA, lysophosphatidate/LPA, sphingosine 1-phosphate/S1P and ceramide 1-phosphate/C1P. Has no apparent extracellular phosphatase activity and therefore most probably acts intracellularly. Also acts on N-oleoyl ethanolamine phosphate/N-(9Z-octadecenoyl)-ethanolamine phosphate, a potential physiological compound. Through dephosphorylation of these bioactive lipid mediators produces new bioactive compounds and may regulate signal transduction in different cellular processes. Indirectly regulates, for instance, cell cycle G1/S phase transition through its phospholipid phosphatase activity. The protein is Phospholipid phosphatase 2 of Mus musculus (Mouse).